A 193-amino-acid polypeptide reads, in one-letter code: Probable nicotinate-nucleotide adenylyltransferase (193 aa).

This sequence belongs to the NadD family.

It catalyses the reaction nicotinate beta-D-ribonucleotide + ATP + H(+) = deamido-NAD(+) + diphosphate. Its pathway is cofactor biosynthesis; NAD(+) biosynthesis; deamido-NAD(+) from nicotinate D-ribonucleotide: step 1/1. Functionally, catalyzes the reversible adenylation of nicotinate mononucleotide (NaMN) to nicotinic acid adenine dinucleotide (NaAD). This is Probable nicotinate-nucleotide adenylyltransferase from Fusobacterium nucleatum subsp. nucleatum (strain ATCC 25586 / DSM 15643 / BCRC 10681 / CIP 101130 / JCM 8532 / KCTC 2640 / LMG 13131 / VPI 4355).